Consider the following 257-residue polypeptide: 4-hydroxy-tetrahydrodipicolinate reductase (257 aa).

Residues 8–13 (GSTGRV), 90–92 (ATT), and 114–117 (ATNM) contribute to the NAD(+) site. Residue His-146 is the Proton donor/acceptor of the active site. His-147 provides a ligand contact to (S)-2,3,4,5-tetrahydrodipicolinate. Lys-150 (proton donor) is an active-site residue. 156-157 (GT) contributes to the (S)-2,3,4,5-tetrahydrodipicolinate binding site.

The protein belongs to the DapB family.

It is found in the cytoplasm. The catalysed reaction is (S)-2,3,4,5-tetrahydrodipicolinate + NAD(+) + H2O = (2S,4S)-4-hydroxy-2,3,4,5-tetrahydrodipicolinate + NADH + H(+). It carries out the reaction (S)-2,3,4,5-tetrahydrodipicolinate + NADP(+) + H2O = (2S,4S)-4-hydroxy-2,3,4,5-tetrahydrodipicolinate + NADPH + H(+). The protein operates within amino-acid biosynthesis; L-lysine biosynthesis via DAP pathway; (S)-tetrahydrodipicolinate from L-aspartate: step 4/4. Functionally, catalyzes the conversion of 4-hydroxy-tetrahydrodipicolinate (HTPA) to tetrahydrodipicolinate. The sequence is that of 4-hydroxy-tetrahydrodipicolinate reductase from Aliarcobacter butzleri (strain RM4018) (Arcobacter butzleri).